The sequence spans 123 residues: CD59 glycoprotein (123 aa).

Positions 1 to 25 are cleaved as a signal peptide; the sequence is MGSKGGFILLWLLSILAVLCHLGHS. The 78-residue stretch at 26–103 folds into the UPAR/Ly6 domain; it reads LQCYNCINPA…LCNKSDATIS (78 aa). Disulfide bonds link C28-C51, C31-C38, C44-C65, C71-C89, and C90-C95. N43 carries N-linked (GlcNAc...) asparagine glycosylation. S98 carries GPI-anchor amidated serine lipidation. Residues 99-123 constitute a propeptide, removed in mature form; it reads DATISSGKTALLVILLLVATWHFCL.

Interacts with T-cell surface antigen CD2. N- and O-glycosylated. In terms of tissue distribution, expressed in all tissues tested (lung, testis liver, kidney, spleen, heart and skeletal muscle). Highest levels in lung and spleen, lowest levels in liver and skeletal muscle.

It is found in the cell membrane. Its subcellular location is the secreted. Its function is as follows. Potent inhibitor of the complement membrane attack complex (MAC) action, which protects self-cells from damage during complement activation. Acts by binding to the beta-haipins of C8 (C8A and C8B) components of the assembling MAC, forming an intermolecular beta-sheet that prevents incorporation of the multiple copies of C9 required for complete formation of the osmolytic pore. The protein is CD59 glycoprotein of Sus scrofa (Pig).